The sequence spans 469 residues: Diaminopimelate decarboxylase (469 aa).

The disordered stretch occupies residues 1 to 23; that stretch reads MLSTEMPLPTTGSTLLKTPASPS. N6-(pyridoxal phosphate)lysine is present on lysine 93. Pyridoxal 5'-phosphate contacts are provided by residues glycine 279 and 321–324; that span reads EPGR. Substrate is bound by residues arginine 324, arginine 361, and tyrosine 365. Cysteine 392 serves as the catalytic Proton donor. 2 residues coordinate substrate: glutamate 393 and tyrosine 421. Residue tyrosine 421 coordinates pyridoxal 5'-phosphate.

Belongs to the Orn/Lys/Arg decarboxylase class-II family. LysA subfamily. As to quaternary structure, homodimer. Requires pyridoxal 5'-phosphate as cofactor.

The catalysed reaction is meso-2,6-diaminopimelate + H(+) = L-lysine + CO2. It functions in the pathway amino-acid biosynthesis; L-lysine biosynthesis via DAP pathway; L-lysine from DL-2,6-diaminopimelate: step 1/1. Its function is as follows. Specifically catalyzes the decarboxylation of meso-diaminopimelate (meso-DAP) to L-lysine. The protein is Diaminopimelate decarboxylase of Synechocystis sp. (strain ATCC 27184 / PCC 6803 / Kazusa).